Consider the following 365-residue polypeptide: Aminomethyltransferase (365 aa).

It belongs to the GcvT family. As to quaternary structure, the glycine cleavage system is composed of four proteins: P, T, L and H.

It carries out the reaction N(6)-[(R)-S(8)-aminomethyldihydrolipoyl]-L-lysyl-[protein] + (6S)-5,6,7,8-tetrahydrofolate = N(6)-[(R)-dihydrolipoyl]-L-lysyl-[protein] + (6R)-5,10-methylene-5,6,7,8-tetrahydrofolate + NH4(+). Functionally, the glycine cleavage system catalyzes the degradation of glycine. The protein is Aminomethyltransferase of Aeromonas hydrophila subsp. hydrophila (strain ATCC 7966 / DSM 30187 / BCRC 13018 / CCUG 14551 / JCM 1027 / KCTC 2358 / NCIMB 9240 / NCTC 8049).